Reading from the N-terminus, the 100-residue chain is NADH-quinone oxidoreductase subunit K 2 (100 aa).

A run of 3 helical transmembrane segments spans residues 4-24, 28-48, and 60-80; these read LWWH…GVLL, ILVV…NFIA, and IFAI…LGIL.

Belongs to the complex I subunit 4L family. In terms of assembly, NDH-1 is composed of 14 different subunits. Subunits NuoA, H, J, K, L, M, N constitute the membrane sector of the complex.

The protein localises to the cell inner membrane. It catalyses the reaction a quinone + NADH + 5 H(+)(in) = a quinol + NAD(+) + 4 H(+)(out). Functionally, NDH-1 shuttles electrons from NADH, via FMN and iron-sulfur (Fe-S) centers, to quinones in the respiratory chain. The immediate electron acceptor for the enzyme in this species is believed to be ubiquinone. Couples the redox reaction to proton translocation (for every two electrons transferred, four hydrogen ions are translocated across the cytoplasmic membrane), and thus conserves the redox energy in a proton gradient. This chain is NADH-quinone oxidoreductase subunit K 2, found in Sinorhizobium fredii (strain NBRC 101917 / NGR234).